A 166-amino-acid chain; its full sequence is NAD(P)H-quinone oxidoreductase subunit I, chloroplastic (166 aa).

4Fe-4S ferredoxin-type domains lie at 55–84 (GRIH…VDWK) and 95–124 (LNYS…MTEE). Cys-64, Cys-67, Cys-70, Cys-74, Cys-104, Cys-107, Cys-110, and Cys-114 together coordinate [4Fe-4S] cluster.

Belongs to the complex I 23 kDa subunit family. In terms of assembly, NDH is composed of at least 16 different subunits, 5 of which are encoded in the nucleus. The cofactor is [4Fe-4S] cluster.

The protein resides in the plastid. The protein localises to the chloroplast thylakoid membrane. It carries out the reaction a plastoquinone + NADH + (n+1) H(+)(in) = a plastoquinol + NAD(+) + n H(+)(out). The catalysed reaction is a plastoquinone + NADPH + (n+1) H(+)(in) = a plastoquinol + NADP(+) + n H(+)(out). In terms of biological role, NDH shuttles electrons from NAD(P)H:plastoquinone, via FMN and iron-sulfur (Fe-S) centers, to quinones in the photosynthetic chain and possibly in a chloroplast respiratory chain. The immediate electron acceptor for the enzyme in this species is believed to be plastoquinone. Couples the redox reaction to proton translocation, and thus conserves the redox energy in a proton gradient. The polypeptide is NAD(P)H-quinone oxidoreductase subunit I, chloroplastic (Sigesbeckia blakei).